The following is a 1104-amino-acid chain: tRNA ligase 1 (1104 aa).

K152 acts as the N6-AMP-lysine intermediate in catalysis.

It belongs to the TRL1 family. Mg(2+) serves as cofactor. In terms of tissue distribution, mainly expressed in proliferating cells and tissues such as root meristems, the vasculature of developing plantlets, flowers and elongating tissue.

Its subcellular location is the nucleus. The protein resides in the cytoplasm. It carries out the reaction ATP + (ribonucleotide)n-3'-hydroxyl + 5'-phospho-(ribonucleotide)m = (ribonucleotide)n+m + AMP + diphosphate.. With respect to regulation, requires the presence of NTP, preferentially ATP rather than dATP, UTP, CTP and GTP, respectively, to mediate ribonucleotide 5'-phosphorylation. Its function is as follows. Essential component of stress-response pathways entailing repair of RNA breaks with 2',3'-cyclic phosphate and 5'-OH ends. Tri-functional enzyme that repairs RNA breaks with 2',3'-cyclic-PO(4) and 5'-OH ends. The ligation activity requires three sequential enzymatic activities: opening of the 2'3'-cyclic phosphodiester bond of the 5' half-tRNA leaving a 2'-phosphomonoester (CPDase activity), phosphorylation of the 5' terminus of the 3' half-tRNA in the presence of ATP (kinase activity) and ligation of the two tRNA halves in an ATP-dependent reaction (ligase activity). Deficient in transferring AMP to pRNA(OH) to form AppRNA(OH) but proficient at sealing pre-adenylylated AppRNA(OH). CPDase and kinase reactions are almost insensitive to RNA length, whereas the ligase activity decreases with shorter RNA size. Can also splice DNA ended by a single 3'-terminal ribonucleoside 2',3'-cyclic-PO(4). Binds to mRNA, mature and immature. Exhibits tRNA ligase activity in vitro. Required for the splicing of precursor tRNA molecules containing introns. Can circularize an intron cleaved from a pre-tRNA by splicing endonuclease in vitro. Seems not involved in unfolded protein response (UPR) in the endoplasmic reticulum. Involved in auxin signaling and polar transport during organ morphogenesis. The sequence is that of tRNA ligase 1 from Arabidopsis thaliana (Mouse-ear cress).